The primary structure comprises 227 residues: UPF0758 protein llmg_1515 (227 aa).

In terms of domain architecture, MPN spans 103–225 (QVLSSKEYGM…YYSFRERDSN (123 aa)). Residues H174, H176, and D187 each contribute to the Zn(2+) site. Residues 174 to 187 (HNHPSGNLQPSQAD) carry the JAMM motif motif.

This sequence belongs to the UPF0758 family.

This Lactococcus lactis subsp. cremoris (strain MG1363) protein is UPF0758 protein llmg_1515.